The primary structure comprises 860 residues: Glucans biosynthesis glucosyltransferase H (860 aa).

The next 6 helical transmembrane spans lie at 141 to 161, 187 to 207, 515 to 535, 572 to 592, 599 to 619, and 682 to 702; these read FILLLLMLAQTSVATYYMKGI, VLPYVIQFGILALFAILFCWV, VFLTGVMSYLSAPLWFFFLVL, LFSTTLTLLFLPKLLSVMLIW, FGGVIRVTLSMLLEMFFSVLL, and FLWWLSPIVGSLMLSIPVSVI.

The protein belongs to the glycosyltransferase 2 family. OpgH subfamily.

Its subcellular location is the cell inner membrane. Its pathway is glycan metabolism; osmoregulated periplasmic glucan (OPG) biosynthesis. Its function is as follows. Involved in the biosynthesis of osmoregulated periplasmic glucans (OPGs). The sequence is that of Glucans biosynthesis glucosyltransferase H from Pseudomonas paraeruginosa (strain DSM 24068 / PA7) (Pseudomonas aeruginosa (strain PA7)).